Consider the following 670-residue polypeptide: Probable Na(+)/H(+) antiporter nhx-3 (670 aa).

The next 8 helical transmembrane spans lie at 41–61 (VYVITTWLLVASLAKILFNLM), 73–93 (LLIIVGLGLGYFLNQTTLSGV), 97–117 (SHAFFLYLLPPIIFDAGYFMP), 129–149 (LVFSVLGTLWNTFAIGGSLLI), 164–184 (EILVFSALISAVDPVAVIAIF), 192–212 (FLFINVFGEALFNDGVTVVLY), 235–255 (GLSFFVVALGGAAIGIIFAIA), and 268–288 (ILAPVFIFLLPYMAYLTAEMV). A glycan (N-linked (GlcNAc...) asparagine) is linked at Asn-310. 4 helical membrane-spanning segments follow: residues 325–345 (MLAQCSETVIFMFLGLSTLTS), 351–371 (FIFIGATLVFCLIYRAIGIIV), 390–410 (FILSYGGLRGAIAYGLVVSIP), and 418–438 (MFITTTICVIYFTVFLQGITI). The tract at residues 648–670 (GDLKGHCGTSRKPKHSMFELRHV) is disordered.

This sequence belongs to the monovalent cation:proton antiporter 1 (CPA1) transporter (TC 2.A.36) family. Post-translationally, phosphorylated. Expressed in hypodermal cells of the main body syncytium, ut1 cells of the vulva and the spermathecal junction cell.

It is found in the endomembrane system. In terms of biological role, plays a role in epithelial membrane transport processes. This Caenorhabditis elegans protein is Probable Na(+)/H(+) antiporter nhx-3 (nhx-3).